The chain runs to 304 residues: Meiotically up-regulated gene 86 protein (304 aa).

The segment covering 1-12 (MSSNPSRSNSRS) has biased composition (low complexity). The disordered stretch occupies residues 1–23 (MSSNPSRSNSRSKNGDLESGLKF). 6 helical membrane-spanning segments follow: residues 93–113 (PAPFGLSAFAFTTFLLSLFNV), 123–143 (MVTAPAAFYGGLAQLLASMWE), 150–170 (FGGAVFGSYGCFWLSYASIFI), 188–208 (AIGLYLICWFIFTFLVLLCTV), 212–232 (LAFFSLFMSLDVCFLLLACAF), and 247–267 (VGGAFGIFSACAAWYNAMAGL).

The protein belongs to the acetate uptake transporter (AceTr) (TC 2.A.96) family.

It is found in the endoplasmic reticulum membrane. Its subcellular location is the golgi apparatus. It localises to the golgi stack membrane. The protein localises to the vacuole membrane. Functionally, has a role in meiosis. In Schizosaccharomyces pombe (strain 972 / ATCC 24843) (Fission yeast), this protein is Meiotically up-regulated gene 86 protein (mug86).